Consider the following 208-residue polypeptide: V-type ATP synthase subunit D (208 aa).

The protein belongs to the V-ATPase D subunit family.

Functionally, produces ATP from ADP in the presence of a proton gradient across the membrane. The protein is V-type ATP synthase subunit D of Chlamydia felis (strain Fe/C-56) (Chlamydophila felis).